The following is an 81-amino-acid chain: Sulfur carrier protein TusA (81 aa).

C19 (cysteine persulfide intermediate) is an active-site residue.

Belongs to the sulfur carrier protein TusA family. In terms of assembly, interacts with IscS.

The protein localises to the cytoplasm. Its pathway is tRNA modification. Sulfur carrier protein involved in sulfur trafficking in the cell. Part of a sulfur-relay system required for 2-thiolation during synthesis of 2-thiouridine of the modified wobble base 5-methylaminomethyl-2-thiouridine (mnm(5)s(2)U) in tRNA. Interacts with IscS and stimulates its cysteine desulfurase activity. Accepts an activated sulfur from IscS, which is then transferred to TusD, and thus determines the direction of sulfur flow from IscS to 2-thiouridine formation. Also appears to be involved in sulfur transfer for the biosynthesis of molybdopterin. This Escherichia fergusonii (strain ATCC 35469 / DSM 13698 / CCUG 18766 / IAM 14443 / JCM 21226 / LMG 7866 / NBRC 102419 / NCTC 12128 / CDC 0568-73) protein is Sulfur carrier protein TusA.